Consider the following 151-residue polypeptide: Copper transporter 2 (151 aa).

The next 2 membrane-spanning stretches (helical) occupy residues 42–62 and 97–117; these read GARGGMYALAILFMFALAVLL and VAYLIMLALMSFNGGVFLAIV.

Belongs to the copper transporter (Ctr) (TC 1.A.56) family. SLC31A subfamily. As to quaternary structure, self-interacts. Interacts with SWEET11 and COPT1.

It is found in the cell membrane. Involved in the transport of copper, in cooperation with SWEET11 and COPT1. Contributes to the removal of copper (Cu) from xylem, and thus to the sensitivity toward bacterial pathogens such as X.oryzae pv. oryzae (Xoo). This chain is Copper transporter 2 (COPT2), found in Oryza sativa subsp. japonica (Rice).